The primary structure comprises 397 residues: MNRVVVGLQWGDEGKGKVVTYLSRYHDIVARFSGGANAGHTVNYGDFKVIHHLLPSADFTKNRGIAIGSGVLLDPQVLTEELRELKEKFPDYSGEIFISESAHVVLPVHKEMDRIIDEVLKIGTTKRGIGPACADRVMRVNVRVAELGNEEKLRYFLEKNLSLKKIYGVDFDAEKMMGDLSTFYETIKDFVVSPVQLKRILEEKSVLFEGTQGVLLDLDVGTYPYVTSMNCSSSGVSAGMGFPVEVDEVLGVFKAYTTRVGEGPFPTELTGEEGEKLRKAGHEYGSTTGRPRRCGWLDLPLLRYAIEISGVDSLVMTKADVLNGFEKIKVCVRYSDGRDLVSLRDLEKKEPVYEVFDGWKSLEDKNFERFVDFIERETGRPVRYISTGEKLEDIVEV.

Residues 11 to 17 and 39 to 41 each bind GTP; these read GDEGKGK and GHT. The active-site Proton acceptor is the D12. Mg(2+) is bound by residues D12 and G39. Residues 12 to 15, 37 to 40, T125, R139, Q212, T227, and R290 contribute to the IMP site; these read DEGK and NAGH. The active-site Proton donor is the H40. Residue 286–292 participates in substrate binding; the sequence is STTGRPR. GTP is bound by residues R292, 318-320, and 386-388; these read KAD and STG.

It belongs to the adenylosuccinate synthetase family. In terms of assembly, homodimer. It depends on Mg(2+) as a cofactor.

Its subcellular location is the cytoplasm. It catalyses the reaction IMP + L-aspartate + GTP = N(6)-(1,2-dicarboxyethyl)-AMP + GDP + phosphate + 2 H(+). The protein operates within purine metabolism; AMP biosynthesis via de novo pathway; AMP from IMP: step 1/2. In terms of biological role, plays an important role in the de novo pathway of purine nucleotide biosynthesis. Catalyzes the first committed step in the biosynthesis of AMP from IMP. This chain is Adenylosuccinate synthetase, found in Thermotoga maritima (strain ATCC 43589 / DSM 3109 / JCM 10099 / NBRC 100826 / MSB8).